Here is a 497-residue protein sequence, read N- to C-terminus: Cysteine--tRNA ligase (497 aa).

C46 contributes to the Zn(2+) binding site. Residues 48–58 (PTVYSDAHLGH) carry the 'HIGH' region motif. The Zn(2+) site is built by C237, H262, and E266. Residues 293–297 (KMSKS) carry the 'KMSKS' region motif. An ATP-binding site is contributed by K296.

This sequence belongs to the class-I aminoacyl-tRNA synthetase family. As to quaternary structure, monomer. It depends on Zn(2+) as a cofactor.

The protein localises to the cytoplasm. It carries out the reaction tRNA(Cys) + L-cysteine + ATP = L-cysteinyl-tRNA(Cys) + AMP + diphosphate. The polypeptide is Cysteine--tRNA ligase (Deinococcus geothermalis (strain DSM 11300 / CIP 105573 / AG-3a)).